A 173-amino-acid polypeptide reads, in one-letter code: Crossover junction endodeoxyribonuclease RuvC (173 aa).

Catalysis depends on residues Asp8, Glu67, and Asp139. 3 residues coordinate Mg(2+): Asp8, Glu67, and Asp139.

This sequence belongs to the RuvC family. In terms of assembly, homodimer which binds Holliday junction (HJ) DNA. The HJ becomes 2-fold symmetrical on binding to RuvC with unstacked arms; it has a different conformation from HJ DNA in complex with RuvA. In the full resolvosome a probable DNA-RuvA(4)-RuvB(12)-RuvC(2) complex forms which resolves the HJ. The cofactor is Mg(2+).

It is found in the cytoplasm. The enzyme catalyses Endonucleolytic cleavage at a junction such as a reciprocal single-stranded crossover between two homologous DNA duplexes (Holliday junction).. Its function is as follows. The RuvA-RuvB-RuvC complex processes Holliday junction (HJ) DNA during genetic recombination and DNA repair. Endonuclease that resolves HJ intermediates. Cleaves cruciform DNA by making single-stranded nicks across the HJ at symmetrical positions within the homologous arms, yielding a 5'-phosphate and a 3'-hydroxyl group; requires a central core of homology in the junction. The consensus cleavage sequence is 5'-(A/T)TT(C/G)-3'. Cleavage occurs on the 3'-side of the TT dinucleotide at the point of strand exchange. HJ branch migration catalyzed by RuvA-RuvB allows RuvC to scan DNA until it finds its consensus sequence, where it cleaves and resolves the cruciform DNA. This is Crossover junction endodeoxyribonuclease RuvC from Yersinia enterocolitica serotype O:8 / biotype 1B (strain NCTC 13174 / 8081).